The primary structure comprises 271 residues: 3-methyl-2-oxobutanoate hydroxymethyltransferase (271 aa).

2 residues coordinate Mg(2+): D53 and D92. 3-methyl-2-oxobutanoate contacts are provided by residues 53-54, D92, and K120; that span reads DS. E122 lines the Mg(2+) pocket. The active-site Proton acceptor is E189.

This sequence belongs to the PanB family. As to quaternary structure, homodecamer; pentamer of dimers. It depends on Mg(2+) as a cofactor.

Its subcellular location is the cytoplasm. It carries out the reaction 3-methyl-2-oxobutanoate + (6R)-5,10-methylene-5,6,7,8-tetrahydrofolate + H2O = 2-dehydropantoate + (6S)-5,6,7,8-tetrahydrofolate. Its pathway is cofactor biosynthesis; (R)-pantothenate biosynthesis; (R)-pantoate from 3-methyl-2-oxobutanoate: step 1/2. In terms of biological role, catalyzes the reversible reaction in which hydroxymethyl group from 5,10-methylenetetrahydrofolate is transferred onto alpha-ketoisovalerate to form ketopantoate. The protein is 3-methyl-2-oxobutanoate hydroxymethyltransferase of Burkholderia vietnamiensis (strain G4 / LMG 22486) (Burkholderia cepacia (strain R1808)).